Reading from the N-terminus, the 682-residue chain is Serine/threonine-protein kinase PLK2 (682 aa).

Positions 25-67 (ACGGDSKKKRPQQPSEDGQSQAQVTPAAPHHHHHHSHSGPEIS) are disordered. The span at 36-48 (QQPSEDGQSQAQV) shows a compositional bias: polar residues. Residues 79–331 (YCRGKVLGKG…LDDIIRHDFF (253 aa)) form the Protein kinase domain. Residues 85–93 (LGKGGFAKC) and Lys-108 contribute to the ATP site. Asp-202 serves as the catalytic Proton acceptor. Thr-236 is modified (phosphothreonine). Positions 402 to 430 (TSITQQPSKHRTDEELQPPPTTFAKSGTS) are disordered. POLO box domains are found at residues 500-578 (WVTK…YMEE) and 598-682 (YLLQ…QRCN).

This sequence belongs to the protein kinase superfamily. Ser/Thr protein kinase family. CDC5/Polo subfamily. Interacts with CIB1. Interacts with NSF; causing NSF dissociation from GRIA2. Post-translationally, catalytic activity is enhanced by phosphorylation of Thr-236.

It is found in the cytoplasm. It localises to the cytoskeleton. The protein localises to the microtubule organizing center. The protein resides in the centrosome. Its subcellular location is the centriole. It is found in the cell projection. It localises to the dendrite. It carries out the reaction L-seryl-[protein] + ATP = O-phospho-L-seryl-[protein] + ADP + H(+). The catalysed reaction is L-threonyl-[protein] + ATP = O-phospho-L-threonyl-[protein] + ADP + H(+). Its activity is regulated as follows. Activated by phosphorylation of Thr-236. Once activated, activity is stimulated by binding target proteins. Tumor suppressor serine/threonine-protein kinase involved in synaptic plasticity, centriole duplication and G1/S phase transition. Polo-like kinases act by binding and phosphorylating proteins that are already phosphorylated on a specific motif recognized by the POLO box domains. Phosphorylates CPAP, NPM1, RAPGEF2, RASGRF1, SNCA, SIPA1L1 and SYNGAP1. Plays a key role in synaptic plasticity and memory by regulating the Ras and Rap protein signaling: required for overactivity-dependent spine remodeling by phosphorylating the Ras activator RASGRF1 and the Rap inhibitor SIPA1L1 leading to their degradation by the proteasome. Conversely, phosphorylates the Rap activator RAPGEF2 and the Ras inhibitor SYNGAP1, promoting their activity. Also regulates synaptic plasticity independently of kinase activity, via its interaction with NSF that disrupts the interaction between NSF and the GRIA2 subunit of AMPARs, leading to a rapid rundown of AMPAR-mediated current that occludes long term depression. Required for procentriole formation and centriole duplication by phosphorylating CPAP and NPM1, respectively. Its induction by p53/TP53 suggests that it may participate in the mitotic checkpoint following stress. The protein is Serine/threonine-protein kinase PLK2 (Plk2) of Rattus norvegicus (Rat).